Consider the following 185-residue polypeptide: Thioredoxin F2, chloroplastic (185 aa).

Residues 59 to 184 (RRIGSCVVRC…LLAAIEAARS (126 aa)) enclose the Thioredoxin domain. Residues Cys109 and Cys112 each act as nucleophile in the active site. A disulfide bridge connects residues Cys109 and Cys112. The residue at position 136 (Cys136) is an S-glutathionyl cysteine; transient.

It belongs to the thioredoxin family. Plant F-type subfamily. Glutathionylation at Cys-136 decreases its ability to be reduced by ferredoxin-thioredoxin reductase and reduces its efficiency in activating target chloroplastic enzymes.

It localises to the plastid. The protein localises to the chloroplast stroma. In terms of biological role, probable thiol-disulfide oxidoreductase involved in the redox regulation of enzymes of both reductive pentose phosphate pathway (Calvin-Benson cycle) and oxidative pentose phosphate pathway. The sequence is that of Thioredoxin F2, chloroplastic from Arabidopsis thaliana (Mouse-ear cress).